The following is a 115-amino-acid chain: Holo-[acyl-carrier-protein] synthase (115 aa).

Mg(2+) is bound by residues D5 and E50.

Belongs to the P-Pant transferase superfamily. AcpS family. The cofactor is Mg(2+).

It localises to the cytoplasm. The enzyme catalyses apo-[ACP] + CoA = holo-[ACP] + adenosine 3',5'-bisphosphate + H(+). Its function is as follows. Transfers the 4'-phosphopantetheine moiety from coenzyme A to a Ser of acyl-carrier-protein. This Campylobacter fetus subsp. fetus (strain 82-40) protein is Holo-[acyl-carrier-protein] synthase.